Consider the following 190-residue polypeptide: Ganglioside GM2 activator (190 aa).

The signal sequence occupies residues 1-23 (MQSLMQAPVLIALGLLFAAPAQA). 4 cysteine pairs are disulfide-bonded: C36-C180, C96-C103, C109-C135, and C122-C133. N-linked (GlcNAc...) asparagine glycosylation occurs at N60.

The protein resides in the lysosome. The catalysed reaction is cholesterol(in) = cholesterol(out). The large binding pocket can accommodate several single chain phospholipids and fatty acids, GM2A also exhibits some calcium-independent phospholipase activity. Binds gangliosides and stimulates ganglioside GM2 degradation. It stimulates only the breakdown of ganglioside GM2 and glycolipid GA2 by beta-hexosaminidase A. It extracts single GM2 molecules from membranes and presents them in soluble form to beta-hexosaminidase A for cleavage of N-acetyl-D-galactosamine and conversion to GM3. Has cholesterol transfer activity. This is Ganglioside GM2 activator (GM2A) from Macaca fascicularis (Crab-eating macaque).